Consider the following 403-residue polypeptide: L-lactate oxidase (403 aa).

One can recognise an FMN hydroxy acid dehydrogenase domain in the interval 21–375; the sequence is EGSVDFVNVF…KHFKLRHNPY (355 aa). Tyrosine 47 provides a ligand contact to pyruvate. FMN-binding positions include 99-101, serine 128, and glutamine 150; that span reads PVA. Position 152 (tyrosine 152) interacts with pyruvate. Residue threonine 178 participates in FMN binding. Pyruvate contacts are provided by arginine 187 and tyrosine 220. Position 246 (lysine 246) interacts with FMN. Histidine 270 and arginine 273 together coordinate pyruvate. Catalysis depends on histidine 270, which acts as the Proton acceptor. FMN is bound by residues 301 to 305 and arginine 325; that span reads DSGVR.

This sequence belongs to the FMN-dependent alpha-hydroxy acid dehydrogenase family. In terms of assembly, homotetramer. FMN is required as a cofactor.

It carries out the reaction (S)-lactate + O2 = pyruvate + H2O2. In terms of biological role, catalyzes the oxidation of (S)-lactate (L-lactate) to pyruvate, with a reduction of O2 to H2O2. Is likely involved in the L-lactate aerobic metabolism of S.iniae that enables the bacterium to utilize L-lactate as an energy source for growth under aerobic conditions in the absence (or at low concentrations) of glucose. The protein is L-lactate oxidase of Streptococcus iniae (Streptococcus shiloi).